The primary structure comprises 474 residues: Type I restriction enzyme EcoBI specificity subunit (474 aa).

Belongs to the type-I restriction system S methylase family. As to quaternary structure, the type I restriction/modification system is composed of three polypeptides R, M and S. The restriction enzyme has stoichiometry R(2)M(2)S(1) while the methyltransferase is M(2)S(1).

Its function is as follows. The specificity (S) subunit of a type I restriction enzyme; this subunit dictates DNA sequence specificity. The M and S subunits together form a methyltransferase (MTase) that methylates A-3 on the top strand and A-4 on the bottom strand of the sequence 5'-TGAN(8)TGCT-3'. In the presence of the R subunit the complex can also act as an endonuclease, binding to the same target sequence but cutting the DNA some distance from this site. Whether the DNA is cut or modified depends on the methylation state of the target sequence. When the target site is unmodified, the DNA is cut. When the target site is hemimethylated, the complex acts as a maintenance MTase modifying the DNA so that both strands become methylated. After locating a non-methylated recognition site, the enzyme complex serves as a molecular motor that translocates DNA in an ATP-dependent manner until a collision occurs that triggers cleavage. The polypeptide is Type I restriction enzyme EcoBI specificity subunit (Escherichia coli).